The following is a 1273-amino-acid chain: Inverted formin-2 (1273 aa).

Disordered regions lie at residues 1-30, 346-387, 427-559, 960-999, and 1021-1273; these read MSVKEGAQRKWAALKEKLGPQDSDPTEANL, GRPR…GQQP, LSSS…PLPG, NKDRKEQMAKAERRKQQLAEEEARRPRDEDGKPIRKGPGK, and KTAR…CVIQ. At Ser-2 the chain carries N-acetylserine. A GBD/FH3 domain is found at 2-330; the sequence is SVKEGAQRKW…RAVLLASDAQ (329 aa). Ser-351 is subject to Phosphoserine. Positions 359 to 382 are enriched in low complexity; the sequence is SVQTNSVQNQGSSSQNTTTPTTKV. The FH1 domain maps to 421 to 564; that stretch reads PLPTPPLSSS…PPLPGFSVPS (144 aa). 2 stretches are compositionally biased toward pro residues: residues 433-516 and 524-558; these read VLPP…PLPS and QPPPPPPPPLPGMCPVPPPPPLPRAGQIPPPPPLP. Positions 589–979 constitute an FH2 domain; it reads HRRVNPPTLR…AERRKQQLAE (391 aa). Residues 907–984 adopt a coiled-coil conformation; the sequence is EASQELDKVF…QQLAEEEARR (78 aa). The 16-residue stretch at 1007-1022 folds into the WH2 domain; that stretch reads DALLADIRKGFQLRKT. Residues 1047-1059 are compositionally biased toward polar residues; sequence ATASNPTQGTNHP. Over residues 1088–1101 the composition is skewed to basic and acidic residues; that stretch reads SKEEDGPPALERRS. Phosphoserine occurs at positions 1172 and 1174. A compositionally biased stretch (acidic residues) spans 1195-1204; that stretch reads GEDEDGEDTA. At Thr-1203 the chain carries Phosphothreonine. 2 positions are modified to phosphoserine: Ser-1216 and Ser-1218. Phosphothreonine occurs at positions 1223 and 1230. Positions 1242 to 1251 are enriched in basic residues; it reads TSKRRKKRPS.

The protein belongs to the formin homology family. Interacts with profilin and actin at the FH1 and FH2 domains respectively. Interacts with DAAM2.

Its subcellular location is the cytoplasm. It is found in the perinuclear region. Phosphate inhibits both the depolymerization and severing activities. Severs actin filaments and accelerates their polymerization and depolymerization. The sequence is that of Inverted formin-2 (Inf2) from Mus musculus (Mouse).